We begin with the raw amino-acid sequence, 120 residues long: Chaperonin GroEL (120 aa).

Residue 23–27 (DGTTT) participates in ATP binding.

The protein belongs to the chaperonin (HSP60) family. Forms a cylinder of 14 subunits composed of two heptameric rings stacked back-to-back. Interacts with the co-chaperonin GroES.

The protein resides in the cytoplasm. It catalyses the reaction ATP + H2O + a folded polypeptide = ADP + phosphate + an unfolded polypeptide.. In terms of biological role, together with its co-chaperonin GroES, plays an essential role in assisting protein folding. The GroEL-GroES system forms a nano-cage that allows encapsulation of the non-native substrate proteins and provides a physical environment optimized to promote and accelerate protein folding. This chain is Chaperonin GroEL, found in Mycobacterium kansasii.